A 275-amino-acid chain; its full sequence is Transcription factor Ovo-like 2 (275 aa).

The segment at 15 to 101 is disordered; sequence SVRSWDELPD…GHLATKQRPV (87 aa). 2 stretches are compositionally biased toward basic and acidic residues: residues 18–29 and 39–49; these read SWDELPDEKRAD and LLHDPPEDCRS. Positions 56–76 are enriched in low complexity; sequence GSGSSSAGEPGGAESSSSPHA. Positions 80 to 89 are enriched in acidic residues; that stretch reads ETPEPGDAEG. 4 consecutive C2H2-type zinc fingers follow at residues 119-141, 147-169, 175-198, and 214-237; these read HSCD…LKCH, HLCT…VRTH, YKCN…KKIH, and YVCE…NSAH. Position 269 is a phosphoserine (S269).

The protein belongs to the krueppel C2H2-type zinc-finger protein family. In terms of assembly, interacts (via zinc-finger domains) with CEBPA (via bZIP domain); the interaction inhibits the transcription factor activity of CEBPA and is required to repress adipogenesis. As to expression, expressed in testis, ovary, heart and skeletal muscle. Expressed in the cornea, but absent from the corneal endothelium.

It localises to the nucleus. Zinc-finger transcription repressor factor. Plays a critical role in maintaining the identity of epithelial lineages by suppressing epithelial-to mesenchymal transition (EMT) mainly through the repression of ZEB1, an EMT inducer. Positively regulates neuronal differentiation. Suppresses cell cycling and terminal differentiation of keratinocytes by directly repressing MYC and NOTCH1. Important for the correct development of primordial germ cells in embryos. Plays dual functions in thermogenesis and adipogenesis to maintain energy balance. Essential for brown/beige adipose tissue-mediated thermogenesis, is necessary for the development of brown adipocytes. In white adipose tissues, limits adipogenesis by blocking CEBPA binding to its transcriptional targets and inhibiting its transcription factor activity. The chain is Transcription factor Ovo-like 2 from Homo sapiens (Human).